The primary structure comprises 158 residues: Transcription elongation factor GreA (158 aa).

Residues 47-68 are a coiled coil; it reads AEYDAAKEAQGLLEMRIAKLEE.

This sequence belongs to the GreA/GreB family.

Functionally, necessary for efficient RNA polymerase transcription elongation past template-encoded arresting sites. The arresting sites in DNA have the property of trapping a certain fraction of elongating RNA polymerases that pass through, resulting in locked ternary complexes. Cleavage of the nascent transcript by cleavage factors such as GreA or GreB allows the resumption of elongation from the new 3'terminus. GreA releases sequences of 2 to 3 nucleotides. In Flavobacterium johnsoniae (strain ATCC 17061 / DSM 2064 / JCM 8514 / BCRC 14874 / CCUG 350202 / NBRC 14942 / NCIMB 11054 / UW101) (Cytophaga johnsonae), this protein is Transcription elongation factor GreA.